The following is a 192-amino-acid chain: Ion-translocating oxidoreductase complex subunit B (192 aa).

The tract at residues 1–26 (MTAIWIAIAALSALALAFGLVLGYAS) is hydrophobic. One can recognise a 4Fe-4S domain in the interval 32–91 (ENDPIVEEVEAMLPQSQCGQCGYPGCRPYAEAVSLNGESINKCGPGGEAMMLKLAEKLNV). [4Fe-4S] cluster is bound by residues cysteine 49, cysteine 52, cysteine 57, cysteine 74, cysteine 117, cysteine 120, cysteine 123, cysteine 127, cysteine 147, cysteine 150, cysteine 153, and cysteine 157. 2 consecutive 4Fe-4S ferredoxin-type domains span residues 108–137 (HVAW…GSTK) and 138–167 (AVHT…LRPI).

Belongs to the 4Fe4S bacterial-type ferredoxin family. RnfB subfamily. As to quaternary structure, the complex is composed of six subunits: RnfA, RnfB, RnfC, RnfD, RnfE and RnfG. The cofactor is [4Fe-4S] cluster.

It localises to the cell inner membrane. Functionally, part of a membrane-bound complex that couples electron transfer with translocation of ions across the membrane. This chain is Ion-translocating oxidoreductase complex subunit B, found in Pectobacterium atrosepticum (strain SCRI 1043 / ATCC BAA-672) (Erwinia carotovora subsp. atroseptica).